Consider the following 107-residue polypeptide: Phosphoribosyl-ATP pyrophosphatase (107 aa).

The protein belongs to the PRA-PH family.

It is found in the cytoplasm. It catalyses the reaction 1-(5-phospho-beta-D-ribosyl)-ATP + H2O = 1-(5-phospho-beta-D-ribosyl)-5'-AMP + diphosphate + H(+). It functions in the pathway amino-acid biosynthesis; L-histidine biosynthesis; L-histidine from 5-phospho-alpha-D-ribose 1-diphosphate: step 2/9. The protein is Phosphoribosyl-ATP pyrophosphatase of Sinorhizobium fredii (strain NBRC 101917 / NGR234).